Here is a 233-residue protein sequence, read N- to C-terminus: Transcriptional regulatory protein PrrA (233 aa).

Residues 9-123 form the Response regulatory domain; it reads RVLVVDDDSD…ELVARVKALL (115 aa). Aspartate 58 carries the 4-aspartylphosphate modification. A DNA-binding region (ompR/PhoB-type) is located at residues 134-232; that stretch reads SETITVGPLE…VRGVGFVLRM (99 aa).

Post-translationally, phosphorylated by PrrB at Asp-58.

The protein resides in the cytoplasm. In terms of biological role, member of the two-component regulatory system PrrB/PrrA that is involved specifically in early intracellular multiplication of Mycobacterium and is essential for its viability. Upon phosphorylation by PrrB, functions as a transcription regulator by direct binding to promoter regions of target genes to positively regulate their expression. Autoregulates its own expression. The chain is Transcriptional regulatory protein PrrA (prrA) from Mycobacterium bovis (strain ATCC BAA-935 / AF2122/97).